A 691-amino-acid chain; its full sequence is Elongation factor G (691 aa).

One can recognise a tr-type G domain in the interval Glu-8–Ile-282. Residues Ala-17–Thr-24, Asp-81–His-85, and Asn-135–Asp-138 contribute to the GTP site.

It belongs to the TRAFAC class translation factor GTPase superfamily. Classic translation factor GTPase family. EF-G/EF-2 subfamily.

Its subcellular location is the cytoplasm. Functionally, catalyzes the GTP-dependent ribosomal translocation step during translation elongation. During this step, the ribosome changes from the pre-translocational (PRE) to the post-translocational (POST) state as the newly formed A-site-bound peptidyl-tRNA and P-site-bound deacylated tRNA move to the P and E sites, respectively. Catalyzes the coordinated movement of the two tRNA molecules, the mRNA and conformational changes in the ribosome. The chain is Elongation factor G from Prochlorococcus marinus subsp. pastoris (strain CCMP1986 / NIES-2087 / MED4).